A 37-amino-acid polypeptide reads, in one-letter code: Large ribosomal subunit protein bL36c (37 aa).

This sequence belongs to the bacterial ribosomal protein bL36 family.

It localises to the plastid. The protein localises to the chloroplast. The protein is Large ribosomal subunit protein bL36c of Cucumis sativus (Cucumber).